Here is a 2090-residue protein sequence, read N- to C-terminus: Ninein (2090 aa).

2 EF-hand domains span residues 8–43 (QHEA…LSLE) and 42–77 (LEEV…ILSR). Phosphoserine is present on S152. EF-hand domains lie at 182-217 (WIEE…YGLQ) and 219-252 (VDGE…NGKS). Residue 245–252 (GLFKNGKS) participates in GTP binding. Phosphoserine is present on S269. 300–304 (DGMGH) provides a ligand contact to GTP. One can recognise an EF-hand 5 domain in the interval 317-352 (EGIENSQEILKALDFSLDGNINLTELTLALENELLV). A coiled-coil region spans residues 357–570 (IHQAALASFK…YRAQGRVLRL (214 aa)). 420–423 (RKLD) lines the GTP pocket. The interval 574-595 (NSPSEEVEANSGGIEPEHGLGS) is disordered. Coiled-coil stretches lie at residues 625 to 1027 (LRLE…QATS), 1068 to 1099 (LSLQ…QKLE), 1181 to 1341 (SELE…SVVQ), and 1441 to 1816 (QDKH…AGGK). The segment at 802-1505 (KMETECNRRT…HDLQITCSEM (704 aa)) is important for interaction with CEP170. The interval 1152–1190 (VRDLGSTGTSSVQRQEVKIEESEASVEGFSELENSEETR) is disordered. Phosphoserine is present on residues S1550 and S1837. Coiled coils occupy residues 1854–1885 (QENE…SNLL) and 1922–2067 (ANRK…QVSL).

In terms of assembly, homooligomer. Interacts with GSK3B/GSK3-beta via its C-terminal domain. Interacts with C14ORF166, such interaction may prevent its phosphorylation by GSK3B. Interacts with AUNIP (via N-terminus). Identified in a complex with AUNIP and AURKA. Interacts with CCDC120. Interacts (via C-terminus) with CEP250. Interacts with CEP170. Interacts with the gamma-tubulin ring complex component TUBGCP3. Interacts with gamma-tubulin. Isoform 6 does not interact with CEP170 or CEP250. Phosphorylated by AURKA/Aurora kinase A and PKA kinases but not CK2 or AURKB/ Aurora kinase B. Ubiquitous. Highly expressed in heart and skeletal muscle. Isoform 1 is more expressed than isoform 5.

Its subcellular location is the cytoplasm. The protein resides in the cytoskeleton. It is found in the microtubule organizing center. The protein localises to the centrosome. It localises to the centriole. Centrosomal protein required in the positioning and anchorage of the microtubule minus-end in epithelial cells. May also act as a centrosome maturation factor. May play a role in microtubule nucleation, by recruiting the gamma-tubulin ring complex to the centrosome. Overexpression does not perturb nucleation or elongation of microtubules but suppresses release of microtubules. Required for centriole organization and microtubule anchoring at the mother centriole. The chain is Ninein (NIN) from Homo sapiens (Human).